We begin with the raw amino-acid sequence, 549 residues long: Glucose-6-phosphate isomerase (549 aa).

N6-acetyllysine occurs at positions 80, 228, and 234. Glu355 serves as the catalytic Proton donor. Active-site residues include His386 and Lys514.

This sequence belongs to the GPI family.

It is found in the cytoplasm. The enzyme catalyses alpha-D-glucose 6-phosphate = beta-D-fructose 6-phosphate. It participates in carbohydrate biosynthesis; gluconeogenesis. The protein operates within carbohydrate degradation; glycolysis; D-glyceraldehyde 3-phosphate and glycerone phosphate from D-glucose: step 2/4. Catalyzes the reversible isomerization of glucose-6-phosphate to fructose-6-phosphate. The polypeptide is Glucose-6-phosphate isomerase (Escherichia coli O17:K52:H18 (strain UMN026 / ExPEC)).